Consider the following 68-residue polypeptide: MLLKSYVFFLLSLLIVGLFTSRDADAQYEDLVTGYLRKGGVSGVSDFEPIEVFGEDYDSDEADEDGKG.

The signal sequence occupies residues 1–26 (MLLKSYVFFLLSLLIVGLFTSRDADA). A propeptide spanning residues 27-38 (QYEDLVTGYLRK) is cleaved from the precursor.

As to expression, expressed in salivary glands.

It is found in the secreted. Horsefly salivary gland immunosuppressant protein that likely inhibits the host inflammatory response by regulation of anti- and pro-inflammatory cytokines. When tested on mouse splenocytes in the presence of LPS, it increases the secretion of the proinflammatory cytokine interleukin-10 (IL10) and decreases the secretion of the proinflammatory cytokine interferon-gamma (IFNG) in a dose-dependent manner. This Tabanus yao (Horsefly) protein is Tabimmunregulin 1.